The sequence spans 21 residues: Helicopsin (21 aa).

It belongs to the CRISP family. Post-translationally, contains 8 disulfide bonds. Expressed by the salivary gland.

It is found in the secreted. Helicopsin exhibits robust neurotoxic activity as shown by immediate death (about 8 minutes) of mice due to respiratory paralysis. The protein is Helicopsin of Helicops angulatus (South American water snake).